The primary structure comprises 118 residues: Large ribosomal subunit protein uL18 (118 aa).

The protein belongs to the universal ribosomal protein uL18 family. In terms of assembly, part of the 50S ribosomal subunit; part of the 5S rRNA/L5/L18/L25 subcomplex. Contacts the 5S and 23S rRNAs.

Functionally, this is one of the proteins that bind and probably mediate the attachment of the 5S RNA into the large ribosomal subunit, where it forms part of the central protuberance. This is Large ribosomal subunit protein uL18 from Rickettsia bellii (strain OSU 85-389).